A 437-amino-acid polypeptide reads, in one-letter code: Enolase (437 aa).

(2R)-2-phosphoglycerate is bound at residue glutamine 162. Catalysis depends on glutamate 204, which acts as the Proton donor. Residues aspartate 251, glutamate 297, and aspartate 324 each coordinate Mg(2+). Residues lysine 349, arginine 378, serine 379, and lysine 400 each coordinate (2R)-2-phosphoglycerate. Catalysis depends on lysine 349, which acts as the Proton acceptor.

It belongs to the enolase family. Requires Mg(2+) as cofactor.

It is found in the cytoplasm. It localises to the secreted. Its subcellular location is the cell surface. The catalysed reaction is (2R)-2-phosphoglycerate = phosphoenolpyruvate + H2O. It functions in the pathway carbohydrate degradation; glycolysis; pyruvate from D-glyceraldehyde 3-phosphate: step 4/5. Functionally, catalyzes the reversible conversion of 2-phosphoglycerate (2-PG) into phosphoenolpyruvate (PEP). It is essential for the degradation of carbohydrates via glycolysis. The chain is Enolase from Chlorobium chlorochromatii (strain CaD3).